The sequence spans 456 residues: Glycerol-3-phosphate acyltransferase 4 (456 aa).

The N-terminal stretch at Met1–Gly37 is a signal peptide. 2 consecutive transmembrane segments (helical) span residues Ile156–Leu176 and Ile180–Leu200. Residue Asn247 is glycosylated (N-linked (GlcNAc...) asparagine). The HXXXXD motif signature appears at His248–Asp253. N-linked (GlcNAc...) asparagine glycans are attached at residues Asn327, Asn328, and Asn362.

Belongs to the 1-acyl-sn-glycerol-3-phosphate acyltransferase family.

The protein resides in the endoplasmic reticulum membrane. It catalyses the reaction sn-glycerol 3-phosphate + an acyl-CoA = a 1-acyl-sn-glycero-3-phosphate + CoA. The enzyme catalyses dodecanoyl-CoA + sn-glycerol 3-phosphate = 1-dodecanoyl-sn-glycerol 3-phosphate + CoA. It carries out the reaction sn-glycerol 3-phosphate + hexadecanoyl-CoA = 1-hexadecanoyl-sn-glycero-3-phosphate + CoA. The catalysed reaction is sn-glycerol 3-phosphate + octadecanoyl-CoA = 1-octadecanoyl-sn-glycero-3-phosphate + CoA. It catalyses the reaction sn-glycerol 3-phosphate + (9Z)-octadecenoyl-CoA = 1-(9Z-octadecenoyl)-sn-glycero-3-phosphate + CoA. The enzyme catalyses (9Z,12Z)-octadecadienoyl-CoA + sn-glycerol 3-phosphate = 1-(9Z,12Z)-octadecadienoyl-sn-glycero-3-phosphate + CoA. Its pathway is phospholipid metabolism; CDP-diacylglycerol biosynthesis; CDP-diacylglycerol from sn-glycerol 3-phosphate: step 1/3. Functionally, converts glycerol-3-phosphate to 1-acyl-sn-glycerol-3-phosphate (lysophosphatidic acid or LPA) by incorporating an acyl moiety at the sn-1 position of the glycerol backbone. Active against both saturated and unsaturated long-chain fatty acyl-CoAs. Protects cells against lipotoxicity. The protein is Glycerol-3-phosphate acyltransferase 4 of Pongo abelii (Sumatran orangutan).